A 421-amino-acid chain; its full sequence is Glucose-1-phosphate adenylyltransferase (421 aa).

Alpha-D-glucose 1-phosphate contacts are provided by residues Y109, G175, 190-191, and S208; that span reads EK.

This sequence belongs to the bacterial/plant glucose-1-phosphate adenylyltransferase family. In terms of assembly, homotetramer.

The catalysed reaction is alpha-D-glucose 1-phosphate + ATP + H(+) = ADP-alpha-D-glucose + diphosphate. The protein operates within glycan biosynthesis; glycogen biosynthesis. Functionally, involved in the biosynthesis of ADP-glucose, a building block required for the elongation reactions to produce glycogen. Catalyzes the reaction between ATP and alpha-D-glucose 1-phosphate (G1P) to produce pyrophosphate and ADP-Glc. In Teredinibacter turnerae (strain ATCC 39867 / T7901), this protein is Glucose-1-phosphate adenylyltransferase.